The sequence spans 419 residues: MFDPLDLYTPDDIQVEALQFNLAEREPKDPCSPQRDEILTAVDEEESDDDDTIIDNLDLPSVKYAPPEVILCILILLKPDRQVNFNQETGKNKSVLEVCKSHGLEPDLLKRLLTWYTEEWPNKRLNSLEKICNKIPMLRFTVSKELLLGYYTSVLKKYNNSCGLNEEIIQELLKELSSRISENCGRTAQPSIVRYFELRNLSTSIPLHEPSLTADNLGWKTWGSSLILSQLVVDHLDYLHTTNVNMLANSDIKQIKVLELGAGTGLVGLSWALKWKELYGTENIEIFVTDLPEIVTNLKKNVSLNNLGDFVQAEILDWTNPHDFIDKFGHENEFDVILIADPIYSPQHPEWVVNMISKFLAASGTCHLEIPLRAKYAKEREVLKLLLKESDLKVVEERHSEGVDDWGAVKYLYRQIVRN.

S-adenosyl-L-methionine is bound by residues tryptophan 222, 261-263, aspartate 290, tryptophan 318, and alanine 340; that span reads GAG.

The protein belongs to the class I-like SAM-binding methyltransferase superfamily. METTL21 family.

The protein localises to the cytoplasm. S-adenosyl-L-methionine-dependent protein-lysine N-methyltransferase that mono- and dimethylates elongation factor 2 (EFT1/EFT2) at 'Lys-613' and methylates elongation factor 3A (YEF3). The protein is Protein-lysine N-methyltransferase EFM2 of Saccharomyces cerevisiae (strain ATCC 204508 / S288c) (Baker's yeast).